A 71-amino-acid chain; its full sequence is Phosphatidylinositol N-acetylglucosaminyltransferase subunit Y (71 aa).

Topologically, residues 1-3 are cytoplasmic; it reads MFL. Residues 4 to 26 form a helical membrane-spanning segment; the sequence is SLPMLTVLIPLVSLAGLFYSASV. Residues 27-44 lie on the Lumenal side of the membrane; the sequence is EDDFPQGCTSTTSLCFYS. The chain crosses the membrane as a helical span at residues 45 to 65; sequence LLLPITIPVYVFFHLWTWMGI. The Cytoplasmic segment spans residues 66 to 71; that stretch reads KLFRHN.

As to quaternary structure, component of the glycosylphosphatidylinositol-N-acetylglucosaminyltransferase (GPI-GnT) complex composed at least by PIGA, PIGC, PIGH, PIGP, PIGQ, PIGY and DPM2. Interacts directly with PIGA; this interaction regulates glycosylphosphatidylinositol-N-acetylglucosaminyltransferase activity. Does not interact with Ras proteins.

Its subcellular location is the endoplasmic reticulum membrane. The protein operates within glycolipid biosynthesis; glycosylphosphatidylinositol-anchor biosynthesis. Functionally, part of the glycosylphosphatidylinositol-N-acetylglucosaminyltransferase (GPI-GnT) complex that catalyzes the transfer of N-acetylglucosamine from UDP-N-acetylglucosamine to phosphatidylinositol and participates in the first step of GPI biosynthesis. May act by regulating the catalytic subunit PIGA. The chain is Phosphatidylinositol N-acetylglucosaminyltransferase subunit Y from Bos taurus (Bovine).